The following is a 73-amino-acid chain: Translation initiation factor IF-1 (73 aa).

Residues 1 to 73 (MAKKDGVIEI…NRGRIVYRYR (73 aa)) form the S1-like domain.

The protein belongs to the IF-1 family. Component of the 30S ribosomal translation pre-initiation complex which assembles on the 30S ribosome in the order IF-2 and IF-3, IF-1 and N-formylmethionyl-tRNA(fMet); mRNA recruitment can occur at any time during PIC assembly.

Its subcellular location is the cytoplasm. Its function is as follows. One of the essential components for the initiation of protein synthesis. Stabilizes the binding of IF-2 and IF-3 on the 30S subunit to which N-formylmethionyl-tRNA(fMet) subsequently binds. Helps modulate mRNA selection, yielding the 30S pre-initiation complex (PIC). Upon addition of the 50S ribosomal subunit IF-1, IF-2 and IF-3 are released leaving the mature 70S translation initiation complex. The polypeptide is Translation initiation factor IF-1 (Acidothermus cellulolyticus (strain ATCC 43068 / DSM 8971 / 11B)).